Here is a 338-residue protein sequence, read N- to C-terminus: 1-aminocyclopropane-1-carboxylate deaminase (338 aa).

An N6-(pyridoxal phosphate)lysine modification is found at lysine 51. The active-site Nucleophile is the serine 78.

The protein belongs to the ACC deaminase/D-cysteine desulfhydrase family. Homotrimer. The cofactor is pyridoxal 5'-phosphate.

The enzyme catalyses 1-aminocyclopropane-1-carboxylate + H2O = 2-oxobutanoate + NH4(+). Functionally, catalyzes a cyclopropane ring-opening reaction, the irreversible conversion of 1-aminocyclopropane-1-carboxylate (ACC) to ammonia and alpha-ketobutyrate. Allows growth on ACC as a nitrogen source. In Pseudomonas sp. (strain ACP), this protein is 1-aminocyclopropane-1-carboxylate deaminase.